The primary structure comprises 171 residues: uncharacterized protein (171 aa).

Residues 3 to 171 (KKVAIILANE…FNREIVKQLQ (169 aa)) enclose the PfpI endopeptidase domain.

The protein belongs to the peptidase C56 family.

This is an uncharacterized protein from Staphylococcus aureus (strain COL).